Here is a 416-residue protein sequence, read N- to C-terminus: Inositol polyphosphate multikinase (416 aa).

The interval 1 to 38 (MATEPPSPLRVEAPGPPEMRTSPAIESTPEGTPQPAGG) is disordered. Alanine 2 bears the N-acetylalanine mark. At serine 7 the chain carries Phosphoserine. Lysine 75 lines the ATP pocket. Arginine 82 provides a ligand contact to substrate. Residues 131 to 133 (EDV) and aspartate 144 each bind ATP. Substrate-binding positions include lysine 146, 160-167 (KIQQQVSK), and glutamine 196. Residues 320–330 (RHRKIYTKKHH) carry the Nuclear localization signal motif. ATP is bound at residue aspartate 385. Histidine 388 serves as a coordination point for substrate.

The protein belongs to the inositol phosphokinase (IPK) family. It depends on Mg(2+) as a cofactor. Ubiquitous, with the highest expression in skeletal muscle, liver, placenta, lung, peripheral blood leukocytes, kidney, spleen and colon.

It is found in the nucleus. It carries out the reaction 1D-myo-inositol 1,4,5-trisphosphate + 2 ATP = 1D-myo-inositol 1,3,4,5,6-pentakisphosphate + 2 ADP + 2 H(+). The catalysed reaction is 1D-myo-inositol 1,3,4,6-tetrakisphosphate + ATP = 1D-myo-inositol 1,3,4,5,6-pentakisphosphate + ADP + H(+). The enzyme catalyses 1-octadecanoyl-2-(5Z,8Z,11Z,14Z)-eicosatetraenoyl-sn-glycero-3-phospho-1D-myo-inositol 4,5-bisphosphate + ATP = 1-octadecanoyl-2-(5Z,8Z,11Z,14Z-eicosatetraenoyl)-sn-glycero-3-phospho-(1D-myo-inositol 3,4,5-triphosphate) + ADP + H(+). It catalyses the reaction a 1,2-diacyl-sn-glycero-3-phospho-(1D-myo-inositol-4,5-bisphosphate) + ATP = a 1,2-diacyl-sn-glycero-3-phospho-(1D-myo-inositol-3,4,5-trisphosphate) + ADP + H(+). It carries out the reaction 1D-myo-inositol 1,4,5,6-tetrakisphosphate + ATP = 1D-myo-inositol 1,3,4,5,6-pentakisphosphate + ADP + H(+). The protein operates within phospholipid metabolism; phosphatidylinositol metabolism. With respect to regulation, inhibited by flavonoids that occupy the ATP-binding pocket. Inhibited by myricetin, quercetin, luteolin, kaempferol, isorhamnetin and diosmetin, and to a lesser degree by rhamnetin and apigenin. Its function is as follows. Inositol phosphate kinase with a broad substrate specificity. Phosphorylates inositol 1,4,5-trisphosphate (Ins(1,4,5)P3) first to inositol 1,3,4,5-tetrakisphosphate and then to inositol 1,3,4,5,6-pentakisphosphate (Ins(1,3,4,5,6)P5). Phosphorylates inositol 1,3,4,6-tetrakisphosphate (Ins(1,3,4,6)P4). Phosphorylates inositol 1,4,5,6-tetrakisphosphate (Ins(1,4,5,6)P4). Phosphorylates glycero-3-phospho-1D-myo-inositol 4,5-bisphosphate to glycero-3-phospho-1D-myo-inositol 3,4,5-trisphosphate. Plays an important role in MLKL-mediated necroptosis via its role in the biosynthesis of inositol pentakisphosphate (InsP5) and inositol hexakisphosphate (InsP6). Binding of these highly phosphorylated inositol phosphates to MLKL mediates the release of an N-terminal auto-inhibitory region, leading to activation of the kinase. Essential for activated phospho-MLKL to oligomerize and localize to the cell membrane during necroptosis. Required for normal embryonic development, probably via its role in the biosynthesis of inositol 1,3,4,5,6-pentakisphosphate (Ins(1,3,4,5,6)P5) and inositol hexakisphosphate (InsP6). The protein is Inositol polyphosphate multikinase (IPMK) of Homo sapiens (Human).